A 148-amino-acid chain; its full sequence is MASFFRTAVRGPSAGLFRAVARPQPIAARVSLFSTSSRFRSEHHEETFEEFTARYEKEFDAVQDVFELQRNLNNAFAYDLVPSPSVLAAALKAARRVNDFPTAVRVFEGIKAKVENKGQYEQYLAELKPLREELGITLKEDLYPEEAN.

Residues Met-1–Arg-40 constitute a mitochondrion transit peptide.

This sequence belongs to the cytochrome c oxidase subunit 5A family. In terms of assembly, component of the cytochrome c oxidase (complex IV, CIV), a multisubunit enzyme composed of 11 subunits. The complex is composed of a catalytic core of 3 subunits Cox1, Cox2 and Cox3, encoded in the mitochondrial DNA, and 8 supernumerary subunits Cox4, Cox5a/Cox5, Cox6, Cox7, Cox8, Cox7a/Cox9, Cox6b/Cox12 and Cox6a/Cox13, which are encoded in the nuclear genome. The complex exists as a monomer or a dimer and forms respiratory supercomplexes (SCs) in the inner mitochondrial membrane with NADH-ubiquinone oxidoreductase (complex I, CI) and ubiquinol-cytochrome c oxidoreductase (cytochrome b-c1 complex, complex III, CIII), resulting in various different assemblies (supercomplexes I(1)IV(1), I(1)III(3)IV(2), III(2)IV(1) and III(2)IV(2) as well as larger supercomplexes of compositions like I(1)III(2)IV(5-6)).

The protein resides in the mitochondrion inner membrane. Its pathway is energy metabolism; oxidative phosphorylation. Functionally, component of the cytochrome c oxidase, the last enzyme in the mitochondrial electron transport chain which drives oxidative phosphorylation. The respiratory chain contains 3 multisubunit complexes succinate dehydrogenase (complex II, CII), ubiquinol-cytochrome c oxidoreductase (cytochrome b-c1 complex, complex III, CIII) and cytochrome c oxidase (complex IV, CIV), that cooperate to transfer electrons derived from NADH and succinate to molecular oxygen, creating an electrochemical gradient over the inner membrane that drives transmembrane transport and the ATP synthase. Cytochrome c oxidase is the component of the respiratory chain that catalyzes the reduction of oxygen to water. Electrons originating from reduced cytochrome c in the intermembrane space (IMS) are transferred via the dinuclear copper A center (CU(A)) of Cox2 and heme A of Cox1 to the active site in Cox1, a binuclear center (BNC) formed by heme A3 and copper B (CU(B)). The BNC reduces molecular oxygen to 2 water molecules using 4 electrons from cytochrome c in the IMS and 4 protons from the mitochondrial matrix. This Neurospora crassa (strain ATCC 24698 / 74-OR23-1A / CBS 708.71 / DSM 1257 / FGSC 987) protein is Cytochrome c oxidase subunit 6, mitochondrial (cox-6).